The sequence spans 387 residues: Putative glutamate--cysteine ligase 2 (387 aa).

The protein belongs to the glutamate--cysteine ligase type 2 family. YbdK subfamily.

It carries out the reaction L-cysteine + L-glutamate + ATP = gamma-L-glutamyl-L-cysteine + ADP + phosphate + H(+). ATP-dependent carboxylate-amine ligase which exhibits weak glutamate--cysteine ligase activity. In Pseudomonas fluorescens (strain ATCC BAA-477 / NRRL B-23932 / Pf-5), this protein is Putative glutamate--cysteine ligase 2.